The sequence spans 890 residues: Potassium/sodium hyperpolarization-activated cyclic nucleotide-gated channel 1 (890 aa).

The segment at 1 to 93 (MEGGGKPNSS…AEGPRRQYGF (93 aa)) is disordered. At 1–142 (MEGGGKPNSS…WIIHPYSDFR (142 aa)) the chain is on the cytoplasmic side. The segment covering 8–34 (NSSSNSRDDGNSVFPAKASATGAGPAA) has biased composition (low complexity). Over residues 62–77 (DGGGGGGGGGGGGEEP) the composition is skewed to gly residues. A helical membrane pass occupies residues 143 to 164 (FYWDLIMLIMMVGNLVIIPVGI). Topologically, residues 165–173 (TFFTEQTTT) are extracellular. Residues 174–194 (PWIIFNVASDTVFLLDLIMNF) form a helical membrane-spanning segment. Over 195-215 (RTGTVNEDSSEIILDPKVIKM) the chain is Cytoplasmic. The chain crosses the membrane as a helical span at residues 216-236 (NYLKSWFVVDFISSIPVDYIF). At 237–260 (LIVEKGMDSEVYKTARALRIVRFT) the chain is on the extracellular side. The chain crosses the membrane as a helical; Voltage-sensor span at residues 261-281 (KILSLLRLLRLSRLIRYIHQW). Topologically, residues 282–295 (EEIFHMTYDLASAV) are cytoplasmic. The helical transmembrane segment at 296-318 (VRIFNLIGMMLLLCHWDGCLQFL) threads the bilayer. Topologically, residues 319–344 (VPLLQDFPPDCWVSLNEMVNDSWGKQ) are extracellular. Asparagine 338 is a glycosylation site (N-linked (GlcNAc...) asparagine). The segment at residues 345 to 366 (YSYALFKAMSHMLCIGYGAQAP) is an intramembrane region (pore-forming). The short motif at 358 to 362 (CIGYG) is the Selectivity filter element. Residues 367–371 (VSMSD) are Extracellular-facing. A helical transmembrane segment spans residues 372–392 (LWITMLSMIVGATCYAMFVGH). Over 393 to 890 (ATALIQSLDS…AEKPRFASNL (498 aa)) the chain is Cytoplasmic. Positions 539, 540, 542, 549, 550, 590, and 593 each coordinate 3',5'-cyclic AMP. Composition is skewed to low complexity over residues 644 to 691 (MTTL…PQPS) and 731 to 749 (QQQP…TQPQ). 3 disordered regions span residues 644-692 (MTTL…QPSA), 725-796 (SQLS…LPHE), and 845-890 (MSSG…ASNL). A compositionally biased stretch (polar residues) spans 770–780 (STQALHNTNLT). The segment covering 854–865 (RGVPPAPPPPAA) has biased composition (pro residues). Basic and acidic residues predominate over residues 880–890 (DAEKPRFASNL).

This sequence belongs to the potassium channel HCN family. As to quaternary structure, homotetramer. Heterotetramer with HCN2. The potassium channel is composed of a homo- or heterotetrameric complex of pore-forming subunits. Interacts with KCNE2. Interacts with the SH3 domain of CSK. As to expression, detected in brain, in particular in amygdala and hippocampus, while expression in caudate nucleus, corpus callosum, substantia nigra, subthalamic nucleus and thalamus is very low or not detectable. Detected at very low levels in muscle and pancreas.

The protein localises to the cell membrane. The enzyme catalyses Na(+)(in) = Na(+)(out). The catalysed reaction is K(+)(in) = K(+)(out). Its activity is regulated as follows. Activated by cAMP, and at 10-100 times higher concentrations, also by cGMP. cAMP binding promotes tetramerization and formation of an active channel. Compared to other family members, cAMP has less stimulatory effect on HCN1 because part of the molecules already contain bound cAMP and form homotetramers when cAMP levels are low, this inherent tetramerization in HCN1 results in a weaker response to increased cAMP. Inhibited by Cs(1+), zatebradine, capsazepine and ZD7288. Its function is as follows. Hyperpolarization-activated ion channel that are permeable to sodium and potassium ions. Displays lower selectivity for K(+) over Na(+) ions. Contributes to the native pacemaker currents in heart (If) and in the generation of the I(h) current which controls neuron excitability. Participates in cerebellar mechanisms of motor learning. May mediate responses to sour stimuli. The polypeptide is Potassium/sodium hyperpolarization-activated cyclic nucleotide-gated channel 1 (HCN1) (Homo sapiens (Human)).